Reading from the N-terminus, the 321-residue chain is Lipoyl synthase (321 aa).

[4Fe-4S] cluster contacts are provided by cysteine 68, cysteine 73, cysteine 79, cysteine 94, cysteine 98, cysteine 101, and serine 308. Positions 80 to 297 constitute a Radical SAM core domain; sequence FNHGTATFMI…KEVALELGFT (218 aa).

The protein belongs to the radical SAM superfamily. Lipoyl synthase family. It depends on [4Fe-4S] cluster as a cofactor.

The protein resides in the cytoplasm. It carries out the reaction [[Fe-S] cluster scaffold protein carrying a second [4Fe-4S](2+) cluster] + N(6)-octanoyl-L-lysyl-[protein] + 2 oxidized [2Fe-2S]-[ferredoxin] + 2 S-adenosyl-L-methionine + 4 H(+) = [[Fe-S] cluster scaffold protein] + N(6)-[(R)-dihydrolipoyl]-L-lysyl-[protein] + 4 Fe(3+) + 2 hydrogen sulfide + 2 5'-deoxyadenosine + 2 L-methionine + 2 reduced [2Fe-2S]-[ferredoxin]. The protein operates within protein modification; protein lipoylation via endogenous pathway; protein N(6)-(lipoyl)lysine from octanoyl-[acyl-carrier-protein]: step 2/2. Functionally, catalyzes the radical-mediated insertion of two sulfur atoms into the C-6 and C-8 positions of the octanoyl moiety bound to the lipoyl domains of lipoate-dependent enzymes, thereby converting the octanoylated domains into lipoylated derivatives. This is Lipoyl synthase from Vibrio cholerae serotype O1 (strain ATCC 39315 / El Tor Inaba N16961).